The chain runs to 254 residues: 3-deoxy-manno-octulosonate cytidylyltransferase (254 aa).

Belongs to the KdsB family.

It is found in the cytoplasm. It carries out the reaction 3-deoxy-alpha-D-manno-oct-2-ulosonate + CTP = CMP-3-deoxy-beta-D-manno-octulosonate + diphosphate. Its pathway is nucleotide-sugar biosynthesis; CMP-3-deoxy-D-manno-octulosonate biosynthesis; CMP-3-deoxy-D-manno-octulosonate from 3-deoxy-D-manno-octulosonate and CTP: step 1/1. It functions in the pathway bacterial outer membrane biogenesis; lipopolysaccharide biosynthesis. In terms of biological role, activates KDO (a required 8-carbon sugar) for incorporation into bacterial lipopolysaccharide in Gram-negative bacteria. This Chlamydia pneumoniae (Chlamydophila pneumoniae) protein is 3-deoxy-manno-octulosonate cytidylyltransferase.